The following is a 399-amino-acid chain: C-type lectin domain family 4 member M (399 aa).

At 1–49 the chain is on the cytoplasmic side; that stretch reads MSDSKEQRVQPLGLLEEDPTTSGIRLFPRDFQFQQTHGHKSSTGCLGHG. The Endocytosis signal motif lies at 14–15; that stretch reads LL. Residues 50 to 70 traverse the membrane as a helical; Signal-anchor for type II membrane protein segment; that stretch reads PLVLQLLSFTLLAGFLVAILV. At 71–399 the chain is on the extracellular side; sequence QVYKGPSSLS…KKPTACFRDE (329 aa). N-linked (GlcNAc...) asparagine glycosylation occurs at N92. 7 consecutive repeat copies span residues 108–130, 131–153, 154–176, 177–199, 200–222, 223–245, and 246–268. Residues 108-269 form a 7 X approximate tandem repeats region; that stretch reads KLQEIYQELT…AFERLCCRCP (162 aa). 4 cysteine pairs are disulfide-bonded: C265–C395, C268–C279, C296–C389, and C368–C381. One can recognise a C-type lectin domain in the interval 274–390; it reads FFQGNCYFIS…CNVDNYWICK (117 aa). Ca(2+) contacts are provided by E359, N361, S363, E366, N377, and D378. The N-linked (GlcNAc...) asparagine glycan is linked to N361.

In terms of assembly, homotetramer.

Its subcellular location is the membrane. Functionally, probable pathogen-recognition receptor involved in peripheral immune surveillance in liver. May mediate the endocytosis of pathogens which are subsequently degraded in lysosomal compartments. Probably recognizes in a calcium-dependent manner high mannose N-linked oligosaccharides in a variety of pathogen antigens. Is a receptor for ICAM3, probably by binding to mannose-like carbohydrates. This chain is C-type lectin domain family 4 member M (CLEC4M), found in Nomascus concolor (Black crested gibbon).